The chain runs to 510 residues: Olfactomedin-4 (510 aa).

Positions 1–20 are cleaved as a signal peptide; it reads MRPGLSFLLALLFFLGQAAG. N-linked (GlcNAc...) asparagine glycans are attached at residues Asn72 and Asn136. A coiled-coil region spans residues 155–234; it reads DFELIKVEVK…ECEASKDQNT (80 aa). The Olfactomedin-like domain occupies 245-507; the sequence is SCGHGGVVNI…LLNYDLSVLQ (263 aa). The cysteines at positions 246 and 437 are disulfide-linked. N-linked (GlcNAc...) asparagine glycosylation is present at Asn253.

As to quaternary structure, homomultimer; disulfide-linked. Interacts with NDUFA13. Interacts with cell surface lectins (locutions ricinus communis agglutinin I, concanavalin-A and wheat germ agglutinin) and cadherin. In terms of processing, N-glycosylated. In terms of tissue distribution, expressed during myeloid lineage development. Much higher expression in bone marrow neutrophils than in peripheral blood neutrophils (at protein level). Strongly expressed in the prostate, small intestine and colon and moderately expressed in the bone marrow and stomach. Overexpressed in some pancreatic cancer tissues.

Its subcellular location is the secreted. It localises to the extracellular space. The protein resides in the mitochondrion. May promote proliferation of pancreatic cancer cells by favoring the transition from the S to G2/M phase. In myeloid leukemic cell lines, inhibits cell growth and induces cell differentiation and apoptosis. May play a role in the inhibition of EIF4EBP1 phosphorylation/deactivation. Facilitates cell adhesion, most probably through interaction with cell surface lectins and cadherin. This Homo sapiens (Human) protein is Olfactomedin-4 (OLFM4).